The sequence spans 721 residues: Long-chain-fatty-acid--CoA ligase ACSBG1 (721 aa).

Positions 1–64 (MPRGSEAGYC…SHGLELSAPE (64 aa)) are disordered. The segment covering 26-52 (QQGASLGTSQDNSQTSSLIDGQTLSKE) has biased composition (polar residues). Phosphoserine is present on residues serine 34, serine 50, serine 53, and serine 70. ATP-binding positions include 279–287 (TSGTTGNPK), 469–474 (AGYGLS), aspartate 547, and arginine 562. Tyrosine 655 carries the phosphotyrosine modification. Lysine 698 lines the ATP pocket.

It belongs to the ATP-dependent AMP-binding enzyme family. Bubblegum subfamily. Mainly expressed in brain. Also expressed in adrenal gland and testis. In brain, it is present in cerebral cortical and cerebellar neurons and in steroidogenic cells of the adrenal gland, testis and ovary (at protein level).

It localises to the cytoplasm. Its subcellular location is the cytoplasmic vesicle. The protein resides in the microsome. It is found in the endoplasmic reticulum. The protein localises to the cell membrane. It catalyses the reaction a long-chain fatty acid + ATP + CoA = a long-chain fatty acyl-CoA + AMP + diphosphate. The enzyme catalyses (E)-hexadec-2-enoate + ATP + CoA = (2E)-hexadecenoyl-CoA + AMP + diphosphate. The catalysed reaction is hexadecanoate + ATP + CoA = hexadecanoyl-CoA + AMP + diphosphate. Its function is as follows. Catalyzes the conversion of fatty acids such as long-chain and very long-chain fatty acids to their active form acyl-CoAs for both synthesis of cellular lipids, and degradation via beta-oxidation. Can activate diverse saturated, monosaturated and polyunsaturated fatty acids. In Mus musculus (Mouse), this protein is Long-chain-fatty-acid--CoA ligase ACSBG1.